A 332-amino-acid polypeptide reads, in one-letter code: Glycerol-3-phosphate dehydrogenase [NAD(P)+] (332 aa).

Ser-10, Trp-11, Lys-31, and Lys-105 together coordinate NADPH. Sn-glycerol 3-phosphate contacts are provided by Lys-105, Gly-136, and Ser-138. Ala-140 provides a ligand contact to NADPH. Lys-191, Asp-244, Ser-254, Arg-255, and Asn-256 together coordinate sn-glycerol 3-phosphate. Residue Lys-191 is the Proton acceptor of the active site. An NADPH-binding site is contributed by Arg-255. Positions 279 and 281 each coordinate NADPH.

This sequence belongs to the NAD-dependent glycerol-3-phosphate dehydrogenase family.

It is found in the cytoplasm. The catalysed reaction is sn-glycerol 3-phosphate + NAD(+) = dihydroxyacetone phosphate + NADH + H(+). It catalyses the reaction sn-glycerol 3-phosphate + NADP(+) = dihydroxyacetone phosphate + NADPH + H(+). The protein operates within membrane lipid metabolism; glycerophospholipid metabolism. Functionally, catalyzes the reduction of the glycolytic intermediate dihydroxyacetone phosphate (DHAP) to sn-glycerol 3-phosphate (G3P), the key precursor for phospholipid synthesis. This is Glycerol-3-phosphate dehydrogenase [NAD(P)+] from Anaeromyxobacter sp. (strain K).